The sequence spans 141 residues: Nucleoside diphosphate kinase (141 aa).

ATP is bound by residues K11, F59, R87, T93, R104, and N114. The active-site Pros-phosphohistidine intermediate is the H117.

Belongs to the NDK family. Homotetramer. The cofactor is Mg(2+).

Its subcellular location is the cytoplasm. The catalysed reaction is a 2'-deoxyribonucleoside 5'-diphosphate + ATP = a 2'-deoxyribonucleoside 5'-triphosphate + ADP. It catalyses the reaction a ribonucleoside 5'-diphosphate + ATP = a ribonucleoside 5'-triphosphate + ADP. Major role in the synthesis of nucleoside triphosphates other than ATP. The ATP gamma phosphate is transferred to the NDP beta phosphate via a ping-pong mechanism, using a phosphorylated active-site intermediate. This chain is Nucleoside diphosphate kinase, found in Azoarcus sp. (strain BH72).